A 551-amino-acid chain; its full sequence is Chaperonin GroEL (551 aa).

ATP is bound by residues 30 to 33 (TLGP), lysine 51, 87 to 91 (DGTTT), glycine 415, 479 to 481 (NAA), and aspartate 495. Positions 523–551 (DSPKEDKSSDMPSPSAGGMGGMGGMGGMM) are disordered. Over residues 539–551 (GGMGGMGGMGGMM) the composition is skewed to gly residues.

The protein belongs to the chaperonin (HSP60) family. As to quaternary structure, forms a cylinder of 14 subunits composed of two heptameric rings stacked back-to-back. Interacts with the co-chaperonin GroES.

Its subcellular location is the cytoplasm. It catalyses the reaction ATP + H2O + a folded polypeptide = ADP + phosphate + an unfolded polypeptide.. Together with its co-chaperonin GroES, plays an essential role in assisting protein folding. The GroEL-GroES system forms a nano-cage that allows encapsulation of the non-native substrate proteins and provides a physical environment optimized to promote and accelerate protein folding. The chain is Chaperonin GroEL from Buchnera aphidicola subsp. Chaetophorus leucomelas.